Reading from the N-terminus, the 421-residue chain is Cytochrome c biogenesis protein Ccs1 (421 aa).

Helical transmembrane passes span 12-32 (LRFA…GTVI), 71-91 (TWWF…CTLL), and 157-177 (IAPI…IIGS).

The protein belongs to the Ccs1/CcsB family. As to quaternary structure, may interact with CcsA.

Its subcellular location is the plastid. It is found in the chloroplast thylakoid membrane. In terms of biological role, required during biogenesis of c-type cytochromes (cytochrome c6 and cytochrome f) at the step of heme attachment. This chain is Cytochrome c biogenesis protein Ccs1, found in Thalassiosira pseudonana (Marine diatom).